The following is a 248-amino-acid chain: Putative eukaryotic initiation factor 4A-like protein (248 aa).

Positions 14-42 (VGFASLGLNEQLINNIKRYGITKLTPFQM) match the Q motif motif. The Helicase ATP-binding domain occupies 45–239 (IKEIKENSNV…NTFIKIPKII (195 aa)). Residue 58-65 (SIEGTGRT) participates in ATP binding. Residues 185–188 (DELD) carry the DEAD box motif.

The protein belongs to the DEAD box helicase family. eIF4A subfamily.

The chain is Putative eukaryotic initiation factor 4A-like protein from Dictyostelium discoideum (Social amoeba).